Here is a 529-residue protein sequence, read N- to C-terminus: MQLPVQLSSPLALAVLSIATCQLALVWWYQRKRTNPLPPGPSALPFLGNAHQIPLQYPERIFSQWARTYGGVMYLRLFKKSVLILDSVKAAQDLMDKRGAKFSDRPQLTLITDVFAFKPMMFTMPYGDLWRRHRKWYQASLESKAALDTYNAVQEMETCTLLSALVSDSEHFADQVKRFTGAILLEIVYGHAVTSVKDDLIRLSDEMMTQAVSAGSLVATLLDFFPFLMHIPEWFPGGGFKREGARVRHLMRQLLDVPFNEVQQAMLEGSGKACLTTYMLEEQAEHGDLTPDDVDNIKGAATLLFIAGTDTTITTLLTFFLAMVLHPEVVHKAQAEIDRVVGRTRLPSLMDRDALPYLDQVLKEVYRWNPPVPLGIPHQVRDDDVYNGRHIPGGSMVVSNIWSMSRDPDTYEDADRFWPERYEGKSSDELARSDPRRIVYGFGRRLCPGRFLADSSIWLAAARVIATLDIRKVLDAEGKEMTPSAEFISGAVSHPKPFSLDILPRDEVAAKLIAQLDPNHLFSVQGEAI.

A helical transmembrane segment spans residues 9–29 (SPLALAVLSIATCQLALVWWY). Residue Cys-447 participates in heme binding.

Belongs to the cytochrome P450 family. Heme is required as a cofactor.

The protein localises to the membrane. The protein operates within secondary metabolite biosynthesis. Its function is as follows. Cytochrome P450 monooxygenase that is able to use delta(6)-protoilludene as a substrate to produce delta(6)-protoilludene-5-ol. This chain is Cytochrome P450 monooxygenase 136, found in Postia placenta (strain ATCC 44394 / Madison 698-R) (Brown rot fungus).